We begin with the raw amino-acid sequence, 1163 residues long: Ankyrin repeat-containing protein F37A4.4 (1163 aa).

The ANK repeat unit spans residues Tyr-856 to Phe-885. The 97-residue stretch at Leu-929 to Leu-1025 folds into the BRCT domain.

This is Ankyrin repeat-containing protein F37A4.4 from Caenorhabditis elegans.